The primary structure comprises 217 residues: GTP cyclohydrolase 1 (217 aa).

Zn(2+) contacts are provided by Cys-109, His-112, and Cys-180.

The protein belongs to the GTP cyclohydrolase I family. In terms of assembly, toroid-shaped homodecamer, composed of two pentamers of five dimers.

It catalyses the reaction GTP + H2O = 7,8-dihydroneopterin 3'-triphosphate + formate + H(+). The protein operates within cofactor biosynthesis; 7,8-dihydroneopterin triphosphate biosynthesis; 7,8-dihydroneopterin triphosphate from GTP: step 1/1. The polypeptide is GTP cyclohydrolase 1 (Photobacterium profundum (strain SS9)).